Here is a 360-residue protein sequence, read N- to C-terminus: MSVCYRPPGNETLLSWKGSRATGTAFLLLAALLGLPGNGFVVWSLAGWRPTAGRPLAATLVLHLALADGAVLLLTPLFVAFLSQEAWPLGQVGCKAVYYVCALSMYASVLLTGLLSLQRCLAVTRPFLAPRLRSPALARRLLLGVWLAALVLAVPAAVYRHLWGGRVCQLCHPSPVHAAAHLSLETLTAFVLPFGTVLGCYGVTLARLRGARWGSGRQGTRVGRLVSAIVLAFGLLWAPYHAVNLLQAVAALAPPEGPLARLGGAGQAARAGTTALAFFSSSVNPVLYVFTAGDLLPRAGPRFLTRLFEGSGEARGGSRSREGTMELRTTPKLKVMGQGRGNGDPGGGDGGKTEKDSQEW.

The Extracellular portion of the chain corresponds to 1 to 24 (MSVCYRPPGNETLLSWKGSRATGT). Asn-10 carries an N-linked (GlcNAc...) asparagine glycan. A helical transmembrane segment spans residues 25-45 (AFLLLAALLGLPGNGFVVWSL). Residues 46 to 60 (AGWRPTAGRPLAATL) lie on the Cytoplasmic side of the membrane. Residues 61 to 81 (VLHLALADGAVLLLTPLFVAF) traverse the membrane as a helical segment. Topologically, residues 82-96 (LSQEAWPLGQVGCKA) are extracellular. Residues 97–117 (VYYVCALSMYASVLLTGLLSL) form a helical membrane-spanning segment. The Cytoplasmic portion of the chain corresponds to 118-140 (QRCLAVTRPFLAPRLRSPALARR). A helical transmembrane segment spans residues 141–161 (LLLGVWLAALVLAVPAAVYRH). Residues 162 to 185 (LWGGRVCQLCHPSPVHAAAHLSLE) lie on the Extracellular side of the membrane. Residues 186 to 206 (TLTAFVLPFGTVLGCYGVTLA) traverse the membrane as a helical segment. Residues 207–224 (RLRGARWGSGRQGTRVGR) lie on the Cytoplasmic side of the membrane. A helical transmembrane segment spans residues 225 to 245 (LVSAIVLAFGLLWAPYHAVNL). Residues 246–275 (LQAVAALAPPEGPLARLGGAGQAARAGTTA) lie on the Extracellular side of the membrane. Residues 276–296 (LAFFSSSVNPVLYVFTAGDLL) traverse the membrane as a helical segment. Over 297–360 (PRAGPRFLTR…GKTEKDSQEW (64 aa)) the chain is Cytoplasmic. The tract at residues 311-360 (SGEARGGSRSREGTMELRTTPKLKVMGQGRGNGDPGGGDGGKTEKDSQEW) is disordered. A compositionally biased stretch (gly residues) spans 338 to 350 (QGRGNGDPGGGDG). Residues 351–360 (GKTEKDSQEW) are compositionally biased toward basic and acidic residues.

It belongs to the G-protein coupled receptor 1 family.

The protein resides in the cell membrane. In terms of biological role, low-affinity receptor for leukotrienes including leukotriene B4. Mediates chemotaxis of granulocytes and macrophages. The response is mediated via G-proteins that activate a phosphatidylinositol-calcium second messenger system. This Mus musculus (Mouse) protein is Leukotriene B4 receptor 2 (Ltb4r2).